A 338-amino-acid polypeptide reads, in one-letter code: Fructose-1,6-bisphosphatase class 1 (338 aa).

Mg(2+)-binding residues include Glu-94, Asp-116, Leu-118, and Asp-119. Substrate is bound by residues 119-122 (DGSS), Asn-210, and Lys-276. Glu-282 lines the Mg(2+) pocket.

Belongs to the FBPase class 1 family. Homotetramer. The cofactor is Mg(2+).

It is found in the cytoplasm. The enzyme catalyses beta-D-fructose 1,6-bisphosphate + H2O = beta-D-fructose 6-phosphate + phosphate. It participates in carbohydrate biosynthesis; gluconeogenesis. This chain is Fructose-1,6-bisphosphatase class 1, found in Burkholderia thailandensis (strain ATCC 700388 / DSM 13276 / CCUG 48851 / CIP 106301 / E264).